Consider the following 192-residue polypeptide: UPF0149 protein YgfB (192 aa).

The protein belongs to the UPF0149 family.

The polypeptide is UPF0149 protein YgfB (Salmonella agona (strain SL483)).